Reading from the N-terminus, the 451-residue chain is Glutamyl-tRNA reductase (451 aa).

Residues 47 to 50 (TCNR), Ser132, 137 to 139 (EPQ), and Gln143 contribute to the substrate site. Cys48 (nucleophile) is an active-site residue. 212-217 (AAGEMN) contributes to the NADP(+) binding site.

It belongs to the glutamyl-tRNA reductase family. As to quaternary structure, homodimer.

It carries out the reaction (S)-4-amino-5-oxopentanoate + tRNA(Glu) + NADP(+) = L-glutamyl-tRNA(Glu) + NADPH + H(+). It functions in the pathway porphyrin-containing compound metabolism; protoporphyrin-IX biosynthesis; 5-aminolevulinate from L-glutamyl-tRNA(Glu): step 1/2. Functionally, catalyzes the NADPH-dependent reduction of glutamyl-tRNA(Glu) to glutamate 1-semialdehyde (GSA). The polypeptide is Glutamyl-tRNA reductase (Psychrobacter sp. (strain PRwf-1)).